The chain runs to 405 residues: Deoxyguanosinetriphosphate triphosphohydrolase-like protein (405 aa).

In terms of domain architecture, HD spans 75–219 (RLTHTIEVAQ…AAIADDIAYN (145 aa)).

Belongs to the dGTPase family. Type 2 subfamily.

The polypeptide is Deoxyguanosinetriphosphate triphosphohydrolase-like protein (Agrobacterium fabrum (strain C58 / ATCC 33970) (Agrobacterium tumefaciens (strain C58))).